The chain runs to 177 residues: MPGSLKEETALLLEDYFQHRAGGAALPPSATAAELRRAAAELERRERPFFRSCAPLARAEPREAAALLRKVAAQLEAEGGLNWGRLLALVVFTGTLAAALAESGCEEGPSRLAAALAAYLAEEQGEWLEEHGGWDGFCRFFGRHGSQPADQNSTLSNAIMAAAGFGIAGLAFLLVVR.

The BH1 motif lies at 75 to 94 (LEAEGGLNWGRLLALVVFTG). Residues 86 to 106 (LLALVVFTGTLAAALAESGCE) form a helical membrane-spanning segment. A BH2 motif is present at residues 126–141 (EWLEEHGGWDGFCRFF). Residues 156-176 (SNAIMAAAGFGIAGLAFLLVV) traverse the membrane as a helical segment.

It belongs to the Bcl-2 family. In terms of assembly, interacts with BAX. Expressed preferentially in heart, skeletal muscle, retina, optical tectum and bursa of Fabricius.

It is found in the cell membrane. Functionally, shows anti-apoptotic properties. Counteract the pro-apoptotic activity of BAX. This Gallus gallus (Chicken) protein is Anti-apoptotic protein NR13 (NR13).